The sequence spans 128 residues: Azurin (128 aa).

Residues 1-128 (AECKVTVDST…SMMKGTVTLK (128 aa)) enclose the Plastocyanin-like domain. Cysteine 3 and cysteine 26 are joined by a disulfide. 4 residues coordinate Cu cation: histidine 46, cysteine 112, histidine 117, and methionine 121.

It is found in the periplasm. Its function is as follows. Transfers electrons from cytochrome c551 to cytochrome oxidase. The chain is Azurin from Pseudomonas putida (Arthrobacter siderocapsulatus).